A 712-amino-acid polypeptide reads, in one-letter code: Sterol uptake control protein 2 (712 aa).

A compositionally biased stretch (polar residues) spans 1 to 19; the sequence is MMMTVKQESPNSTLNTSEF. Positions 1 to 52 are disordered; sequence MMMTVKQESPNSTLNTSEFSSDENLKTNNSEPPKKVSKSSTGKRKYHQKSRN. The span at 35-50 shows a compositional bias: basic residues; it reads KVSKSSTGKRKYHQKS. The segment at residues 54–81 is a DNA-binding region (zn(2)-C6 fungal-type); that stretch reads CSTCKKRRVKCDEQRPVCGNCTKLKLDC. Disordered stretches follow at residues 95-150 and 236-342; these read KKDI…VIPP and TTVP…ANPL. 3 stretches are compositionally biased toward polar residues: residues 113-143, 252-306, and 326-337; these read STVS…QDIK, RKSQ…SGSP, and KSLPNISPNMSI.

The protein resides in the nucleus. In terms of biological role, transcription factor involved in the regulation of ergosterol biosynthetic genes such as ERG2 and ERG11 through direct binding to sterol response elements (SREs) in the promoters. Also binds to its own promoter on 2 cis-acting elements to promote autoregulation. Regulates sterol uptake across the plasma membrane. Acts as a major regulator of ascorbic acid-induced response. Plays a role in the triggering of pyroptosis, an inflammasome-mediated programmed cell death pathway in macrophages, allowing macrophages escaping. The sequence is that of Sterol uptake control protein 2 from Candida albicans (strain SC5314 / ATCC MYA-2876) (Yeast).